The following is a 372-amino-acid chain: tRNA-specific 2-thiouridylase MnmA (372 aa).

ATP contacts are provided by residues 16-23 (GMSGGVDS) and Met-42. The tract at residues 102-104 (NPD) is interaction with target base in tRNA. Cys-107 serves as the catalytic Nucleophile. Cys-107 and Cys-205 are disulfide-bonded. Gly-132 is an ATP binding site. Positions 155–157 (KDQ) are interaction with tRNA. Cys-205 functions as the Cysteine persulfide intermediate in the catalytic mechanism. Positions 317–318 (RY) are interaction with tRNA.

The protein belongs to the MnmA/TRMU family.

Its subcellular location is the cytoplasm. It carries out the reaction S-sulfanyl-L-cysteinyl-[protein] + uridine(34) in tRNA + AH2 + ATP = 2-thiouridine(34) in tRNA + L-cysteinyl-[protein] + A + AMP + diphosphate + H(+). Catalyzes the 2-thiolation of uridine at the wobble position (U34) of tRNA, leading to the formation of s(2)U34. The protein is tRNA-specific 2-thiouridylase MnmA of Shewanella baltica (strain OS223).